The sequence spans 173 residues: Co-chaperone protein HscB homolog (173 aa).

Residues C5–I77 form the J domain.

The protein belongs to the HscB family. As to quaternary structure, interacts with HscA and stimulates its ATPase activity.

In terms of biological role, co-chaperone involved in the maturation of iron-sulfur cluster-containing proteins. Seems to help targeting proteins to be folded toward HscA. The polypeptide is Co-chaperone protein HscB homolog (Pseudomonas fluorescens (strain Pf0-1)).